The chain runs to 678 residues: ERAD-associated E3 ubiquitin-protein ligase component HRD3A (678 aa).

Positions 1-25 are cleaved as a signal peptide; that stretch reads MRILSYGIVILSLLVFSFIEFGVHA. The segment at 40–71 is disordered; sequence GGDDNGVGESSDFDEFGESEPKSEEELDPGSW. Sel1-like repeat units lie at residues 124–159, 242–277, 279–313, 317–349, 353–386, 388–422, 506–537, and 540–568; these read PHAQSIMGFVYGIGMMREKSKSKSFLHHNFAAAGGN, ANAMYKIGLFYYFGLRGLRRDHTKALHWFLKAVDKG, PRSMELLGEIYARGAGVERNYTKALEWLTLAAKEG, AFNGIGYLYVKGYGVDKKNYTKAREYFEKAVDN, SGHYNLGVLYLKGIGVNRDVRQATKYFFVAANAG, PKAFYQLAKMFHTGVGLKKNLEMATSFYKLVAERG, AALLIGDAYYYGRGTERDFVRAAEAYMHAKSQ, and AQAMFNLGYMHEHGQGLPFDLHLAKRYYD. Residues Asn298 and Asn335 are each glycosylated (N-linked (GlcNAc...) asparagine). Residues 620-640 form a helical membrane-spanning segment; that stretch reads VVFEEGNATILTLFVCLITIL.

This sequence belongs to the sel-1 family. As to quaternary structure, interacts with OS9.

The protein resides in the endoplasmic reticulum membrane. Functionally, component of the endoplasmic reticulum (ER) quality control system called ER-associated degradation (ERAD) and involved in ubiquitin-dependent degradation of misfolded endoplasmic reticulum proteins. Functions as an ERAD substrate-recruiting factor that recognizes misfolded proteins for the HRD1 E3 ubiquitin ligase complex. Targets the misfolded LRR receptor kinase BRI1. This chain is ERAD-associated E3 ubiquitin-protein ligase component HRD3A, found in Arabidopsis thaliana (Mouse-ear cress).